The following is a 143-amino-acid chain: Mediator of RNA polymerase II transcription subunit 21 (143 aa).

Residues 53–130 (KEFEKNIDEL…KVRTLTQDFT (78 aa)) adopt a coiled-coil conformation.

This sequence belongs to the Mediator complex subunit 21 family. Component of the Mediator complex.

Its subcellular location is the nucleus. Component of the Mediator complex, a coactivator involved in the regulated transcription of nearly all RNA polymerase II-dependent genes. Mediator functions as a bridge to convey information from gene-specific regulatory proteins to the basal RNA polymerase II transcription machinery. Mediator is recruited to promoters by direct interactions with regulatory proteins and serves as a scaffold for the assembly of a functional preinitiation complex with RNA polymerase II and the general transcription factors. This is Mediator of RNA polymerase II transcription subunit 21 (SRB7) from Kluyveromyces lactis (strain ATCC 8585 / CBS 2359 / DSM 70799 / NBRC 1267 / NRRL Y-1140 / WM37) (Yeast).